The chain runs to 86 residues: Small ribosomal subunit protein uS15 (86 aa).

It belongs to the universal ribosomal protein uS15 family. As to quaternary structure, part of the 30S ribosomal subunit. Forms a bridge to the 50S subunit in the 70S ribosome, contacting the 23S rRNA.

Functionally, one of the primary rRNA binding proteins, it binds directly to 16S rRNA where it helps nucleate assembly of the platform of the 30S subunit by binding and bridging several RNA helices of the 16S rRNA. Its function is as follows. Forms an intersubunit bridge (bridge B4) with the 23S rRNA of the 50S subunit in the ribosome. In Mycoplasma pneumoniae (strain ATCC 29342 / M129 / Subtype 1) (Mycoplasmoides pneumoniae), this protein is Small ribosomal subunit protein uS15.